The chain runs to 365 residues: Medium chain reductase pydE (365 aa).

Positions 21–362 constitute an Enoyl reductase (ER) domain; that stretch reads KLIDSLPVPP…SKRARGKVLI (342 aa). NADP(+)-binding positions include 185–188, tyrosine 226, 274–275, and 354–355; these read SGSV, IG, and KR.

It belongs to the zinc-containing alcohol dehydrogenase family. In terms of assembly, monomer.

Its pathway is mycotoxin biosynthesis. Medium chain reductase; part of the gene cluster that mediates the biosynthesis of pyrrocidines, fungal natural products containing a macrocyclic para-cyclophane connected to a decahydrofluorene ring system that show potent antibiotic activities toward Gram-negative bacteria. Within the pathway, pydE functions synergistically with pydB, pydX and pydZ to form the cyclophane. The pathway begins with the PKS-NRPS pydA which, with the help of the trans-enoyl reductase pydC, synthesizes the polyketide-tyrosyl acyl thioester product which can be reductively off-loaded by the terminal reductase (R) domain in pydA. The alpha/beta hydrolase pydG is then required to catalyze the subsequent Knoevenagel condensation that affords the 3-pyrrolin-2-one ring, whereas the four proteins pydB, pydE, pydX and pydZ then function synergistically to form the cyclophane. PydB and the membrane-bound pydX and pydZ are lipid-binding proteins that can sequester and mold the pdyG product into the inverse S-shape. Binding of the medium chain reductase pydE to the complex would trigger the cascade oxidative cyclization. PydY is involved in the Diels-Alder cycloaddition that forms the decahydrofluorene core. Additional non-enzymatic hydroxylation yields pyrrocidine A2 which can be further reduced into pyrrocidine B by an endogenous reductase. This Acremonium sp protein is Medium chain reductase pydE.